The primary structure comprises 357 residues: Ribosomal RNA small subunit methyltransferase C (357 aa).

Belongs to the methyltransferase superfamily. RsmC family. As to quaternary structure, monomer.

It localises to the cytoplasm. It carries out the reaction guanosine(1207) in 16S rRNA + S-adenosyl-L-methionine = N(2)-methylguanosine(1207) in 16S rRNA + S-adenosyl-L-homocysteine + H(+). In terms of biological role, specifically methylates the guanine in position 1207 of 16S rRNA in the 30S particle. This chain is Ribosomal RNA small subunit methyltransferase C, found in Colwellia psychrerythraea (strain 34H / ATCC BAA-681) (Vibrio psychroerythus).